The sequence spans 513 residues: ATP synthase subunit alpha 2 (513 aa).

169–176 (GDRQCGKT) serves as a coordination point for ATP.

The protein belongs to the ATPase alpha/beta chains family. As to quaternary structure, F-type ATPases have 2 components, CF(1) - the catalytic core - and CF(0) - the membrane proton channel. CF(1) has five subunits: alpha(3), beta(3), gamma(1), delta(1), epsilon(1). CF(0) has three main subunits: a(1), b(2) and c(9-12). The alpha and beta chains form an alternating ring which encloses part of the gamma chain. CF(1) is attached to CF(0) by a central stalk formed by the gamma and epsilon chains, while a peripheral stalk is formed by the delta and b chains.

It localises to the cell inner membrane. It carries out the reaction ATP + H2O + 4 H(+)(in) = ADP + phosphate + 5 H(+)(out). In terms of biological role, produces ATP from ADP in the presence of a proton gradient across the membrane. The alpha chain is a regulatory subunit. This is ATP synthase subunit alpha 2 from Paraburkholderia xenovorans (strain LB400).